A 317-amino-acid chain; its full sequence is Ribosomal RNA small subunit methyltransferase H (317 aa).

S-adenosyl-L-methionine-binding positions include 32–34 (GGH), aspartate 51, phenylalanine 78, aspartate 99, and glutamine 106.

It belongs to the methyltransferase superfamily. RsmH family.

It is found in the cytoplasm. It carries out the reaction cytidine(1402) in 16S rRNA + S-adenosyl-L-methionine = N(4)-methylcytidine(1402) in 16S rRNA + S-adenosyl-L-homocysteine + H(+). Functionally, specifically methylates the N4 position of cytidine in position 1402 (C1402) of 16S rRNA. The polypeptide is Ribosomal RNA small subunit methyltransferase H (Helicobacter hepaticus (strain ATCC 51449 / 3B1)).